A 123-amino-acid polypeptide reads, in one-letter code: Large ribosomal subunit protein uL29 (123 aa).

It belongs to the universal ribosomal protein uL29 family.

This Theileria lestoquardi protein is Large ribosomal subunit protein uL29 (RPL35).